Reading from the N-terminus, the 344-residue chain is Holliday junction branch migration complex subunit RuvB (344 aa).

Residues 1–185 (MTERSDRDVS…FGFTAHMDFY (185 aa)) form a large ATPase domain (RuvB-L) region. ATP contacts are provided by residues leucine 24, arginine 25, glycine 66, lysine 69, threonine 70, serine 71, 132–134 (EDF), arginine 175, tyrosine 185, and arginine 222. Threonine 70 lines the Mg(2+) pocket. The small ATPAse domain (RuvB-S) stretch occupies residues 186–256 (EPAELERVLA…VAKAALEVYD (71 aa)). The interval 259–344 (ELGLDRLDRA…VGASQPGLFE (86 aa)) is head domain (RuvB-H). DNA-binding residues include arginine 314 and arginine 319.

This sequence belongs to the RuvB family. Homohexamer. Forms an RuvA(8)-RuvB(12)-Holliday junction (HJ) complex. HJ DNA is sandwiched between 2 RuvA tetramers; dsDNA enters through RuvA and exits via RuvB. An RuvB hexamer assembles on each DNA strand where it exits the tetramer. Each RuvB hexamer is contacted by two RuvA subunits (via domain III) on 2 adjacent RuvB subunits; this complex drives branch migration. In the full resolvosome a probable DNA-RuvA(4)-RuvB(12)-RuvC(2) complex forms which resolves the HJ.

The protein resides in the cytoplasm. The enzyme catalyses ATP + H2O = ADP + phosphate + H(+). In terms of biological role, the RuvA-RuvB-RuvC complex processes Holliday junction (HJ) DNA during genetic recombination and DNA repair, while the RuvA-RuvB complex plays an important role in the rescue of blocked DNA replication forks via replication fork reversal (RFR). RuvA specifically binds to HJ cruciform DNA, conferring on it an open structure. The RuvB hexamer acts as an ATP-dependent pump, pulling dsDNA into and through the RuvAB complex. RuvB forms 2 homohexamers on either side of HJ DNA bound by 1 or 2 RuvA tetramers; 4 subunits per hexamer contact DNA at a time. Coordinated motions by a converter formed by DNA-disengaged RuvB subunits stimulates ATP hydrolysis and nucleotide exchange. Immobilization of the converter enables RuvB to convert the ATP-contained energy into a lever motion, pulling 2 nucleotides of DNA out of the RuvA tetramer per ATP hydrolyzed, thus driving DNA branch migration. The RuvB motors rotate together with the DNA substrate, which together with the progressing nucleotide cycle form the mechanistic basis for DNA recombination by continuous HJ branch migration. Branch migration allows RuvC to scan DNA until it finds its consensus sequence, where it cleaves and resolves cruciform DNA. In Mycobacterium tuberculosis (strain ATCC 25177 / H37Ra), this protein is Holliday junction branch migration complex subunit RuvB.